We begin with the raw amino-acid sequence, 1178 residues long: DNA-directed RNA polymerase subunit beta (1178 aa).

It belongs to the RNA polymerase beta chain family. In terms of assembly, the RNAP catalytic core consists of 2 alpha, 1 beta, 1 beta' and 1 omega subunit. When a sigma factor is associated with the core the holoenzyme is formed, which can initiate transcription.

It catalyses the reaction RNA(n) + a ribonucleoside 5'-triphosphate = RNA(n+1) + diphosphate. In terms of biological role, DNA-dependent RNA polymerase catalyzes the transcription of DNA into RNA using the four ribonucleoside triphosphates as substrates. In Treponema pallidum (strain Nichols), this protein is DNA-directed RNA polymerase subunit beta.